We begin with the raw amino-acid sequence, 343 residues long: Protein RecA (343 aa).

64–71 is an ATP binding site; that stretch reads GPESSGKT.

It belongs to the RecA family.

The protein resides in the cytoplasm. Functionally, can catalyze the hydrolysis of ATP in the presence of single-stranded DNA, the ATP-dependent uptake of single-stranded DNA by duplex DNA, and the ATP-dependent hybridization of homologous single-stranded DNAs. It interacts with LexA causing its activation and leading to its autocatalytic cleavage. In Cereibacter sphaeroides (strain ATCC 17023 / DSM 158 / JCM 6121 / CCUG 31486 / LMG 2827 / NBRC 12203 / NCIMB 8253 / ATH 2.4.1.) (Rhodobacter sphaeroides), this protein is Protein RecA.